A 2294-amino-acid chain; its full sequence is Reducing polyketide synthase BOA9 (2294 aa).

The Ketosynthase family 3 (KS3) domain occupies 4–409; the sequence is PEPVAIIGMG…GANATAIVEA (406 aa). Residues 537 to 853 form a malonyl-CoA:ACP transacylase (MAT) domain region; sequence IFTGQGAQNA…DYAATLVRGQ (317 aa). The active-site For malonyltransferase activity is the Ser-630. The N-terminal hotdog fold stretch occupies residues 930–1067; sequence HDLLGAILPG…GTVTKKKAVT (138 aa). Positions 930–1104 are dehydratase (DH) domain; it reads HDLLGAILPG…LNYGPAFNGL (175 aa). A PKS/mFAS DH domain is found at 930–1236; the sequence is HDLLGAILPG…CTQYSEALDD (307 aa). Catalysis depends on His-962, which acts as the Proton acceptor; for dehydratase activity. Residues 1078 to 1236 form a C-terminal hotdog fold region; it reads QEPKAARTWY…CTQYSEALDD (159 aa). Asp-1142 serves as the catalytic Proton donor; for dehydratase activity. The segment at 1618 to 1908 is enoyl reductase (ER) domain; that stretch reads GIFDTIHFKD…KNSRIGRVVV (291 aa). The interval 1934-2107 is ketoreductase (KR) domain; that stretch reads VHTYLLGVLE…LPATTISLTV (174 aa). The region spanning 2214-2292 is the Carrier domain; that stretch reads LLLPDILEMI…SLAKKIYDIR (79 aa). Ser-2251 carries the O-(pantetheine 4'-phosphoryl)serine modification.

It functions in the pathway polyketide biosynthesis. Functionally, reducing polyketide synthase; part of the gene cluster B that mediates the biosynthesis of botcinic acid and its botcinin derivatives, acetate-derived polyketides that contribute to virulence when combined with the sesquiterpene botrydial. Botcinic acid and its derivatives have been shown to induce chlorosis and necrosis during host plant infection, but also have antifungal activities. Two polyketide synthases, BOA6 and BOA9, are involved in the biosynthesis of botcinins. BOA6 mediates the formation of the per-methylated tetraketide core by condensation of four units of malonyl-CoA with one unit of acetyl-CoA, which would be methylated in activated methylene groups to yield a bicyclic acid intermediate that could then either be converted to botrylactone derivatives or lose the starter acetate unit through a retro-Claisen type C-C bond cleavage to yield botcinin derivatives. The second polyketide synthase, BOA9, is probably required for the biosynthesis of the tetraketide side chain of botcinins. The methyltransferase (MT) domain within BOA6 is probably responsible for the incorporation of four methyl groups. The trans-enoyl reductase BOA5 might take over the enoyl reductase function of BOA6 that misses an ER domain. The monooxygenases BOA2, BOA3 and BOA4 might be involved in further hydroxylations at C4, C5 and C8, whereas BOA7, close to BOA9, could potentially be involved in the hydroxylation at C4 in the side chain of botcinins. This chain is Reducing polyketide synthase BOA9, found in Botryotinia fuckeliana (strain B05.10) (Noble rot fungus).